Consider the following 502-residue polypeptide: Intracellular exo-alpha-(1-&gt;5)-L-arabinofuranosidase (502 aa).

Positions 29, 74, and 174 each coordinate alpha-L-arabinofuranose. E175 serves as the catalytic Proton donor/acceptor. Residues Y246, E294, and Q351 each coordinate alpha-L-arabinofuranose. The active-site Nucleophile is the E294.

It belongs to the glycosyl hydrolase 51 family. Homohexamer; trimer of dimers.

Its subcellular location is the cytoplasm. It catalyses the reaction Hydrolysis of terminal non-reducing alpha-L-arabinofuranoside residues in alpha-L-arabinosides.. Its pathway is glycan metabolism; L-arabinan degradation. Its activity is regulated as follows. Strongly inhibited by Hg(2+). Its function is as follows. Involved in the degradation of arabinan and is a key enzyme in the complete degradation of the plant cell wall. Catalyzes the cleavage of terminal alpha-(1-&gt;5)-arabinofuranosyl bonds in different hemicellulosic homopolysaccharides (branched and debranched arabinans). It acts preferentially on aryl-alpha-L-arabinofuranosides, and is much less effective on aryl-beta-D-xylopyranosides. The chain is Intracellular exo-alpha-(1-&gt;5)-L-arabinofuranosidase (abfA) from Geobacillus stearothermophilus (Bacillus stearothermophilus).